The following is a 786-amino-acid chain: Endonuclease MutS2 (786 aa).

335 to 342 is an ATP binding site; that stretch reads GPNTGGKT. One can recognise a Smr domain in the interval 711-786; that stretch reads LDLRGERFEN…GLGVTVVELK (76 aa).

This sequence belongs to the DNA mismatch repair MutS family. MutS2 subfamily. Homodimer. Binds to stalled ribosomes, contacting rRNA.

Its function is as follows. Endonuclease that is involved in the suppression of homologous recombination and thus may have a key role in the control of bacterial genetic diversity. Acts as a ribosome collision sensor, splitting the ribosome into its 2 subunits. Detects stalled/collided 70S ribosomes which it binds and splits by an ATP-hydrolysis driven conformational change. Acts upstream of the ribosome quality control system (RQC), a ribosome-associated complex that mediates the extraction of incompletely synthesized nascent chains from stalled ribosomes and their subsequent degradation. Probably generates substrates for RQC. The chain is Endonuclease MutS2 from Bacillus cereus (strain ATCC 10987 / NRS 248).